Consider the following 464-residue polypeptide: 2-oxoadipate dioxygenase/decarboxylase (464 aa).

2-oxoadipate is bound by residues His70, Arg74, and His226. His70 is a binding site for Fe(2+). His226 and Glu294 together coordinate Fe(2+). Val402 is a binding site for 2-oxoadipate.

The protein belongs to the 2-oxoadipate dioxygenase/decarboxylase family. Fe(2+) serves as cofactor.

The enzyme catalyses 2-oxoadipate + O2 = (R)-2-hydroxyglutarate + CO2. The protein operates within amino-acid degradation. With respect to regulation, inhibited by EDTA. Catalyzes the decarboxylation and hydroxylation of 2-oxoadipate (2OA) to form D-2-hydroxyglutarate (D-2-HGA). Is specific for 2-oxoadipate. Is involved in a D-lysine catabolic pathway. The chain is 2-oxoadipate dioxygenase/decarboxylase from Pseudomonas putida (strain ATCC 47054 / DSM 6125 / CFBP 8728 / NCIMB 11950 / KT2440).